Here is a 228-residue protein sequence, read N- to C-terminus: Prolactin-2A1 (228 aa).

An N-terminal signal peptide occupies residues 1–28; the sequence is MQLSVTHPCCRTLILLLVSNLLLWESEA. 2 disulfides stabilise this stretch: Cys87–Cys203 and Cys220–Cys228.

It belongs to the somatotropin/prolactin family. As to expression, expressed specifically in the placenta. Expression restricted to the junctional zone of the chorioallantoic placenta.

Its subcellular location is the secreted. This chain is Prolactin-2A1 (Prl2a1), found in Mus musculus (Mouse).